The sequence spans 379 residues: Phospholipase A1 (379 aa).

A signal peptide spans 1–20 (MKFITAILVIFCVYLLSTAG). Residues 21–73 (DSKILPLKKLPSKIFGHLKSHVDNTVKKPLKVFGHLKSHVENSVGPLRMNKLT) constitute a propeptide that is removed on maturation. Cysteine 76 and cysteine 154 form a disulfide bridge. Asparagine 126 carries an N-linked (GlcNAc...) asparagine glycan. The active-site Nucleophile is serine 204. Aspartate 232 serves as the catalytic Charge relay system. 2 disulfide bridges follow: cysteine 243–cysteine 248 and cysteine 285–cysteine 291. Catalysis depends on histidine 293, which acts as the Charge relay system.

Belongs to the AB hydrolase superfamily. Lipase family. Post-translationally, contains five disulfide bonds. Expressed by the venom gland.

The protein resides in the secreted. The enzyme catalyses a 1,2-diacyl-sn-glycero-3-phosphocholine + H2O = a 2-acyl-sn-glycero-3-phosphocholine + a fatty acid + H(+). Functionally, catalyzes the hydrolysis of phosphatidylcholine with phospholipase A1 activity. May act as an allergen and induce hemolytic activity. In Dinoponera quadriceps (South American ant), this protein is Phospholipase A1.